The primary structure comprises 110 residues: Large ribosomal subunit protein uL22 (110 aa).

It belongs to the universal ribosomal protein uL22 family. As to quaternary structure, part of the 50S ribosomal subunit.

In terms of biological role, this protein binds specifically to 23S rRNA; its binding is stimulated by other ribosomal proteins, e.g. L4, L17, and L20. It is important during the early stages of 50S assembly. It makes multiple contacts with different domains of the 23S rRNA in the assembled 50S subunit and ribosome. The globular domain of the protein is located near the polypeptide exit tunnel on the outside of the subunit, while an extended beta-hairpin is found that lines the wall of the exit tunnel in the center of the 70S ribosome. The sequence is that of Large ribosomal subunit protein uL22 from Syntrophotalea carbinolica (strain DSM 2380 / NBRC 103641 / GraBd1) (Pelobacter carbinolicus).